Here is a 229-residue protein sequence, read N- to C-terminus: UPF0173 metal-dependent hydrolase Hbut_0886 (229 aa).

The protein belongs to the UPF0173 family.

In Hyperthermus butylicus (strain DSM 5456 / JCM 9403 / PLM1-5), this protein is UPF0173 metal-dependent hydrolase Hbut_0886.